Consider the following 338-residue polypeptide: Anthranilate phosphoribosyltransferase (338 aa).

Residues glycine 78, 81 to 82 (GD), threonine 86, 88 to 91 (NIST), 106 to 114 (KHGNRSVSS), and serine 118 each bind 5-phospho-alpha-D-ribose 1-diphosphate. Glycine 78 serves as a coordination point for anthranilate. Serine 90 contacts Mg(2+). Asparagine 109 is an anthranilate binding site. Residue arginine 164 coordinates anthranilate. Mg(2+) contacts are provided by aspartate 223 and glutamate 224.

This sequence belongs to the anthranilate phosphoribosyltransferase family. As to quaternary structure, homodimer. It depends on Mg(2+) as a cofactor.

It carries out the reaction N-(5-phospho-beta-D-ribosyl)anthranilate + diphosphate = 5-phospho-alpha-D-ribose 1-diphosphate + anthranilate. It functions in the pathway amino-acid biosynthesis; L-tryptophan biosynthesis; L-tryptophan from chorismate: step 2/5. Functionally, catalyzes the transfer of the phosphoribosyl group of 5-phosphorylribose-1-pyrophosphate (PRPP) to anthranilate to yield N-(5'-phosphoribosyl)-anthranilate (PRA). This is Anthranilate phosphoribosyltransferase from Bacillus velezensis (strain DSM 23117 / BGSC 10A6 / LMG 26770 / FZB42) (Bacillus amyloliquefaciens subsp. plantarum).